A 252-amino-acid polypeptide reads, in one-letter code: Imidazole glycerol phosphate synthase subunit HisF (252 aa).

Residues Asp13 and Asp132 contribute to the active site.

This sequence belongs to the HisA/HisF family. Heterodimer of HisH and HisF.

It is found in the cytoplasm. The enzyme catalyses 5-[(5-phospho-1-deoxy-D-ribulos-1-ylimino)methylamino]-1-(5-phospho-beta-D-ribosyl)imidazole-4-carboxamide + L-glutamine = D-erythro-1-(imidazol-4-yl)glycerol 3-phosphate + 5-amino-1-(5-phospho-beta-D-ribosyl)imidazole-4-carboxamide + L-glutamate + H(+). Its pathway is amino-acid biosynthesis; L-histidine biosynthesis; L-histidine from 5-phospho-alpha-D-ribose 1-diphosphate: step 5/9. Its function is as follows. IGPS catalyzes the conversion of PRFAR and glutamine to IGP, AICAR and glutamate. The HisF subunit catalyzes the cyclization activity that produces IGP and AICAR from PRFAR using the ammonia provided by the HisH subunit. This is Imidazole glycerol phosphate synthase subunit HisF from Campylobacter fetus subsp. fetus (strain 82-40).